Reading from the N-terminus, the 369-residue chain is Peptidyl-prolyl cis-trans isomerase D (369 aa).

The 166-residue stretch at Tyr-8–Ile-173 folds into the PPIase cyclophilin-type domain. TPR repeat units follow at residues Val-218 to Tyr-251, Val-269 to Asp-302, and Ala-306 to Asp-339.

The protein belongs to the cyclophilin-type PPIase family. PPIase D subfamily.

The protein localises to the cytoplasm. It catalyses the reaction [protein]-peptidylproline (omega=180) = [protein]-peptidylproline (omega=0). Its function is as follows. PPIases accelerate the folding of proteins. It catalyzes the cis-trans isomerization of proline imidic peptide bonds in oligopeptides. The chain is Peptidyl-prolyl cis-trans isomerase D (CPR6) from Eremothecium gossypii (strain ATCC 10895 / CBS 109.51 / FGSC 9923 / NRRL Y-1056) (Yeast).